The sequence spans 502 residues: 4,4'-diapophytoene desaturase (4,4'-diaponeurosporene-forming) (502 aa).

5 to 17 (VIGAGVTGLAAAA) contributes to the FAD binding site.

Belongs to the carotenoid/retinoid oxidoreductase family. CrtN subfamily.

It catalyses the reaction 15-cis-4,4'-diapophytoene + 3 FAD + 3 H(+) = all-trans-4,4'-diaponeurosporene + 3 FADH2. Its pathway is carotenoid biosynthesis; staphyloxanthin biosynthesis; staphyloxanthin from farnesyl diphosphate: step 2/5. Functionally, involved in the biosynthesis of the yellow-orange carotenoid staphyloxanthin, which plays a role in the virulence via its protective function against oxidative stress. Catalyzes three successive dehydrogenation reactions that lead to the introduction of three double bonds into 4,4'-diapophytoene (dehydrosqualene), with 4,4'-diapophytofluene and 4,4'-diapo-zeta-carotene as intermediates, and 4,4'-diaponeurosporene (the major deep-yellow pigment in staphylococci strains) as the end product. In Staphylococcus aureus (strain MW2), this protein is 4,4'-diapophytoene desaturase (4,4'-diaponeurosporene-forming).